The primary structure comprises 383 residues: uncharacterized protein (383 aa).

The protein belongs to the peptidase M20 family.

This is an uncharacterized protein from Staphylococcus aureus (strain bovine RF122 / ET3-1).